The chain runs to 302 residues: MVWKRLGALVMFPLQMIYLVVKAAVGLVLPAKLRDLSRENVLITGGGRGIGRQLAREFAERGARKIVLWGRTEKCLKETTEEIRQMGTECHYFICDVGNREEVYQTAKAVREKVGDITILVNNAAVVHGKSLMDSDDDALLKSQHINTLGQFWTTKAFLPRMLELQNGHIVCLNSVLALSAIPGAIDYCTSKASAFAFMESLTLGLLDCPGVSATTVLPFHTSTEMFQGMRVRFPNLFPPLKPETVARRTVEAVQLNQALLLLPWTMHALVILKSILPQAALEEIHKFSGTYTCMNTFKGRT.

4 helical membrane-spanning segments follow: residues 9 to 29 (LVMF…GLVL), 170 to 190 (IVCL…DYCT), 195 to 215 (AFAF…VSAT), and 253 to 273 (AVQL…LVIL). Position 175 (Ser175) interacts with substrate. The active-site Proton acceptor is Tyr188.

This sequence belongs to the short-chain dehydrogenases/reductases (SDR) family. In terms of tissue distribution, widely expressed with highest levels found in heart, placenta, lung, liver, kidney, pancreas, thyroid, testis, stomach, trachea and spinal cord. Lower levels found in skeletal muscle, intestine and lymph node. No expression detected in brain. In the retina, expressed in cone but not rod outer segments.

Its subcellular location is the membrane. It carries out the reaction all-trans-retinol + NADP(+) = all-trans-retinal + NADPH + H(+). Its function is as follows. Catalyzes the reduction of all-trans-retinal to all-trans-retinol in the presence of NADPH. In Homo sapiens (Human), this protein is Short-chain dehydrogenase/reductase 3 (DHRS3).